Consider the following 140-residue polypeptide: MEIILKIGILGFGAVFGYLFGEVDLLVKVLVCFIVADYISGLLASGYLGELSSKMGFKGIAKKIAILILVAIAHQIDLILGTHNTTRDAVIFFYLANELISILENFVRMGMKVPEVLKNLILIFDAKSGDEEEKHDKDMD.

2 helical membrane passes run 4–21 (ILKI…YLFG) and 26–48 (LVKV…SGYL).

The protein belongs to the bacteriophage holin family. Cp-1 holin subfamily.

It localises to the cell membrane. This is an uncharacterized protein from Listeria innocua serovar 6a (strain ATCC BAA-680 / CLIP 11262).